The sequence spans 341 residues: S-adenosylmethionine:tRNA ribosyltransferase-isomerase (341 aa).

The protein belongs to the QueA family. In terms of assembly, monomer.

It localises to the cytoplasm. The enzyme catalyses 7-aminomethyl-7-carbaguanosine(34) in tRNA + S-adenosyl-L-methionine = epoxyqueuosine(34) in tRNA + adenine + L-methionine + 2 H(+). It participates in tRNA modification; tRNA-queuosine biosynthesis. Functionally, transfers and isomerizes the ribose moiety from AdoMet to the 7-aminomethyl group of 7-deazaguanine (preQ1-tRNA) to give epoxyqueuosine (oQ-tRNA). In Trichlorobacter lovleyi (strain ATCC BAA-1151 / DSM 17278 / SZ) (Geobacter lovleyi), this protein is S-adenosylmethionine:tRNA ribosyltransferase-isomerase.